Here is a 363-residue protein sequence, read N- to C-terminus: GDSL esterase/lipase At2g24560 (363 aa).

Residues 1–22 (MSTSKTITFTLFIAALLSSCDA) form the signal peptide. An N-linked (GlcNAc...) asparagine glycan is attached at N25. S41 functions as the Nucleophile in the catalytic mechanism. N-linked (GlcNAc...) asparagine glycans are attached at residues N103 and N325. Residues D333 and H336 contribute to the active site.

Belongs to the 'GDSL' lipolytic enzyme family.

Its subcellular location is the secreted. The polypeptide is GDSL esterase/lipase At2g24560 (Arabidopsis thaliana (Mouse-ear cress)).